The sequence spans 274 residues: Prothoracicostatic peptide (274 aa).

Residues 1–19 (MRWCLFALWVFGVATVVTA) form the signal peptide. The propeptide occupies 20–67 (AEEPHHDAAPQTDNEVDLTEDDKRAWSSLHSGWAKRAWQDMSSAWGKR). Trp-76 bears the Tryptophan amide mark. The propeptide occupies 77–91 (GKRGWQDLNSAWGKR). A Tryptophan amide modification is found at Trp-100. A propeptide spanning residues 101–136 (GKRGWQDLNSAWGKRDDDEAMEKKSWQDLNSVWGKR) is cleaved from the precursor. The residue at position 145 (Trp-145) is a Tryptophan amide. Residues 146-148 (GKR) constitute a propeptide that is removed on maturation. At Trp-157 the chain carries Tryptophan amide. Residues 158–172 (GKRGWNDISSVWGKR) constitute a propeptide that is removed on maturation. Trp-181 is subject to Tryptophan amide. Residues 182–274 (GKRAWQDMSS…NEHSATTNEA (93 aa)) constitute a propeptide that is removed on maturation.

Its subcellular location is the secreted. In terms of biological role, inhibits ecdysteroid biosynthesis in the prothoracic gland of fifth instar larvae, with maximum inhibition during the spinning stage. When administered to day 8 fifth instar larvae it produces a significant delay in the commencement spinning behavior. In Bombyx mori (Silk moth), this protein is Prothoracicostatic peptide.